Reading from the N-terminus, the 71-residue chain is Prokaryotic ubiquitin-like protein Pup (71 aa).

Residues 1–18 (MATRDSGGQSQTGRSQQG) show a composition bias toward low complexity. The segment at 1-42 (MATRDSGGQSQTGRSQQGEEIEDVTTEASPEVAERHAEITED) is disordered. Residues 27-65 (EASPEVAERHAEITEDVDDLLDEIDSVLEENAEEFVRGY) are ARC ATPase binding. Residues 31-60 (EVAERHAEITEDVDDLLDEIDSVLEENAEE) are a coiled coil. An Isoglutamyl lysine isopeptide (Glu-Lys) (interchain with K-? in acceptor proteins) cross-link involves residue Glu71.

The protein belongs to the prokaryotic ubiquitin-like protein family. Strongly interacts with the proteasome-associated ATPase ARC through a hydrophobic interface; the interacting region of Pup lies in its C-terminal half. There is one Pup binding site per ARC hexamer ring.

Its pathway is protein degradation; proteasomal Pup-dependent pathway. Functionally, protein modifier that is covalently attached to lysine residues of substrate proteins, thereby targeting them for proteasomal degradation. The tagging system is termed pupylation. This is Prokaryotic ubiquitin-like protein Pup from Salinispora arenicola (strain CNS-205).